Consider the following 132-residue polypeptide: Transmembrane protein 170B (132 aa).

Topologically, residues 1–37 (MRAEGADHSMINLSVQQVLSLWAHGTVLRNLTEMWYW) are extracellular. An N-linked (GlcNAc...) asparagine glycan is attached at Asn-12. A helical membrane pass occupies residues 38-58 (IFLWALFSSLFVHGAAGVLMF). The Cytoplasmic segment spans residues 59-68 (VMLQRHRQGR). The helical transmembrane segment at 69-89 (VLSIIAVSIGFLASVTGAMIT) threads the bilayer. Residues 90–104 (SAAVAGIYRVAGKNM) lie on the Extracellular side of the membrane. A helical membrane pass occupies residues 105 to 125 (APLEALVWGVGQTVLTLIISF). At 126-132 (SRILATL) the chain is on the cytoplasmic side.

This sequence belongs to the TMEM170 family. In terms of assembly, interacts with CTNNB1.

The protein localises to the cell membrane. In Rattus norvegicus (Rat), this protein is Transmembrane protein 170B (Tmem170b).